The chain runs to 136 residues: MINFIRSYALYFAWAISCAGTLISIFYSYILNVEPCILCYYQRICLFPLTVILGISAYREDSSIKLYILPQAVLGLGISIYQVFLQEIPGMQLDICGRVSCSTKIFLFSYVTIPMASVVAFGAIVCLLVLTKKYRG.

A helical transmembrane segment spans residues 7–26; that stretch reads SYALYFAWAISCAGTLISIF. An intrachain disulfide couples C36 to C39. The next 2 helical transmembrane spans lie at 41–60 and 67–84; these read YQRICLFPLTVILGISAYRE and YILPQAVLGLGISIYQVF. C96 and C101 are oxidised to a cystine. A helical transmembrane segment spans residues 109–131; sequence SYVTIPMASVVAFGAIVCLLVLT.

It belongs to the DsbB family. BdbC subfamily.

The protein localises to the cell inner membrane. Required for disulfide bond formation in some proteins. In Chlamydia pneumoniae (Chlamydophila pneumoniae), this protein is Probable disulfide formation protein.